The chain runs to 198 residues: Prostamide/prostaglandin F synthase (198 aa).

At tyrosine 108 the chain carries Phosphotyrosine.

It belongs to the peroxiredoxin-like PRXL2 family. Prostamide/prostaglandin F synthase subfamily.

Its subcellular location is the cytoplasm. The protein localises to the cytosol. The enzyme catalyses prostaglandin H2 + [thioredoxin]-dithiol = prostaglandin F2alpha + [thioredoxin]-disulfide. The catalysed reaction is prostamide F2alpha + [thioredoxin]-disulfide = prostamide H2 + [thioredoxin]-dithiol. In terms of biological role, catalyzes the reduction of prostaglandin-ethanolamide H(2) (prostamide H(2)) to prostamide F(2alpha) with NADPH as proton donor. Also able to reduce prostaglandin H(2) to prostaglandin F(2alpha). This chain is Prostamide/prostaglandin F synthase (PRXL2B), found in Pongo abelii (Sumatran orangutan).